The primary structure comprises 232 residues: Ornithine carbamoyltransferase (232 aa).

Residues Q15, R39, and 66–69 (HPTQ) contribute to the carbamoyl phosphate site. L-ornithine is bound by residues N99, D163, and 167-168 (SM). Carbamoyl phosphate-binding positions include 204–207 (HCLP) and T232.

It belongs to the aspartate/ornithine carbamoyltransferase superfamily. OTCase family.

It localises to the cytoplasm. It catalyses the reaction carbamoyl phosphate + L-ornithine = L-citrulline + phosphate + H(+). It functions in the pathway amino-acid biosynthesis; L-arginine biosynthesis; L-arginine from L-ornithine and carbamoyl phosphate: step 1/3. In terms of biological role, reversibly catalyzes the transfer of the carbamoyl group from carbamoyl phosphate (CP) to the N(epsilon) atom of ornithine (ORN) to produce L-citrulline. The sequence is that of Ornithine carbamoyltransferase (argF) from Neisseria pharyngis.